A 656-amino-acid chain; its full sequence is Anion exchange transporter (656 aa).

Residues 1–75 are Cytoplasmic-facing; the sequence is MTGAKRKKRS…LSFAMLSSVH (75 aa). The chain crosses the membrane as a helical span at residues 76 to 96; the sequence is PVFGLYGSLFPAIIYAIFGMG. Residues 97-144 are Extracellular-facing; that stretch reads RHVATGTFALTSLISANAVERLVPQSSRNLTTQSNSSVLGLSEFELQR. A helical membrane pass occupies residues 145–165; sequence IGVAAAVSFLGGVIQLVMFVL. Position 166 (Q166) is a topological domain, cytoplasmic. A helical membrane pass occupies residues 167–187; the sequence is LGSATFLLTEPVISAMTTGAA. The Extracellular segment spans residues 188-199; sequence THVVTSQVKYLL. A helical transmembrane segment spans residues 200 to 220; sequence GIKMPYISGPLGFFYIYAYVF. The Cytoplasmic segment spans residues 221–222; that stretch reads EN. The chain crosses the membrane as a helical span at residues 223–243; it reads IKSVQLEALLFSLLSIIVLVL. The Extracellular segment spans residues 244–254; that stretch reads VKELNEQFKRK. A helical membrane pass occupies residues 255-275; it reads IKVVLPVDLVLIIAASFACYC. At 276 to 306 the chain is on the cytoplasmic side; it reads TNMENTYGLEVVGHIPNGIPPPRAPPMNILS. The helical transmembrane segment at 307-327 threads the bilayer; it reads AVLTEAFGVALVGYVASLALA. The Extracellular segment spans residues 328-343; the sequence is QGSAKKFKYSVDDNQE. Residues 344–364 traverse the membrane as a helical segment; sequence FLAHGLSNVIPSFLFCIPSAA. The Cytoplasmic segment spans residues 365–383; sequence AMGRTAGLYSTGAKTQVAC. 2 helical membrane passes run 384–404 and 405–425; these read LISC…LYWL and PMCV…IQFR. Residues 426-448 are Extracellular-facing; it reads DLKKYWNVDKIDWGIWISTYIFT. Residues 449–469 form a helical membrane-spanning segment; sequence ICFAANVGLLFGVICTIAIVL. Topologically, residues 470-656 are cytoplasmic; it reads GRFPRAKTLS…LSKASDHSEV (187 aa). The region spanning 492–641 is the STAS domain; the sequence is TEMHDETSQQ…DSVPAAISII (150 aa). The tract at residues 641 to 656 is membrane targeting; it reads IQSNKNLSKASDHSEV.

Belongs to the SLC26A/SulP transporter (TC 2.A.53) family. Expressed in the Reissner's membrane epithelial cells in the cochlea (at protein level). Expressed in the retinal pigment epithelium (at protein level). Abundantly expressed in parietal cells on the glandular portion of the stomach. Lower levels are observed in the kidney, with expression in the proximal tubule and thick ascending limb of the loop of Henle. Also expressed in distal segments of nephron, in extraglomerular mesagial cells and a subpopulation of intercalated cells of outer medullary collecting ducts. Expressed in the thyroid gland.

It localises to the basolateral cell membrane. It is found in the recycling endosome membrane. The protein localises to the apical cell membrane. The protein resides in the lateral cell membrane. It carries out the reaction chloride(in) = chloride(out). The enzyme catalyses iodide(out) = iodide(in). It catalyses the reaction bromide(in) = bromide(out). The catalysed reaction is oxalate(in) = oxalate(out). It carries out the reaction nitrate(in) = nitrate(out). The enzyme catalyses sulfate(in) = sulfate(out). It catalyses the reaction hydrogencarbonate(in) = hydrogencarbonate(out). The catalysed reaction is D-gluconate(in) = D-gluconate(out). It carries out the reaction thiocyanate(in) = thiocyanate(out). The enzyme catalyses hydrogencarbonate(in) + chloride(out) = hydrogencarbonate(out) + chloride(in). Its activity is regulated as follows. Regulated by pH. Activity inhibited by all inhibitors of several anion channels and transporters, including 4,4'-Di-isothiocyanatostilbene-2,2'-disulfonic acid (DIDS), diphenylamine-2-carboxylic acid, glybenclamide and 5-Nitro-2-(3-phenylpropyl-amino)benzoic acid. Functionally, acts as an anion channel mediating the transport of chloride, bromide, iodide, nitrate, sulfate, gluconate, thiocyanate and bicarbonate ions. Its permeability towards bicarbonate is weak and increases when pH is above 7. Mediates oxalate transport. Mediates thiocyanate transport in retinal pigment epithelium cells. Mediates iodide transport in the thyroid gland, playing an important role in the synthesis of thyroid hormones and the maintenance of thyroid function. Although it is an anion channel, according to PubMed:12736153 and PubMed:19723628 it has been shown to exhibit chloride-bicarbonate exchanger activity. In Mus musculus (Mouse), this protein is Anion exchange transporter.